Consider the following 488-residue polypeptide: NADH-quinone oxidoreductase subunit N (488 aa).

Transmembrane regions (helical) follow at residues 15-35, 42-62, 79-99, 108-128, 133-153, 168-188, 209-229, 243-263, 277-297, 305-325, 333-353, 376-396, 409-429, and 456-476; these read LALPEIWMLVMACVVLVVDLY, GMTFMLTQFTLVVAGVLAIVA, NLAAVLKVAIAGLGFLSFAYC, LLKGEYFVLGLFSLLGMMIMA, LMTVYLGLELLALTLYAMVAF, FVLGAIASGILLYGMSLIYGA, WLLLLGMTLVVVGVAFKFGAV, PTTVALFASTAPKVAAVALFV, WQPMIILLAVASLVVGNLAAL, MLAYSTASHVGFILLGFIAGT, LFYAITYGIMSAGAFGLIILL, MALMMLLLMFSMTGIPGTVGF, VGLVWLAVFAVVFAVIGAFYY, and GLLVANGIAVLLLGIFPDSLI.

This sequence belongs to the complex I subunit 2 family. As to quaternary structure, NDH-1 is composed of 14 different subunits. Subunits NuoA, H, J, K, L, M, N constitute the membrane sector of the complex.

It is found in the cell inner membrane. The catalysed reaction is a quinone + NADH + 5 H(+)(in) = a quinol + NAD(+) + 4 H(+)(out). Functionally, NDH-1 shuttles electrons from NADH, via FMN and iron-sulfur (Fe-S) centers, to quinones in the respiratory chain. The immediate electron acceptor for the enzyme in this species is believed to be ubiquinone. Couples the redox reaction to proton translocation (for every two electrons transferred, four hydrogen ions are translocated across the cytoplasmic membrane), and thus conserves the redox energy in a proton gradient. The polypeptide is NADH-quinone oxidoreductase subunit N (Alkalilimnicola ehrlichii (strain ATCC BAA-1101 / DSM 17681 / MLHE-1)).